Here is a 534-residue protein sequence, read N- to C-terminus: 2,3-bisphosphoglycerate-independent phosphoglycerate mutase (534 aa).

Positions 15 and 65 each coordinate Mn(2+). Ser-65 functions as the Phosphoserine intermediate in the catalytic mechanism. Substrate is bound by residues His-126, 156–157 (RD), Arg-188, Arg-194, 261–264 (RPDR), and Lys-334. 5 residues coordinate Mn(2+): Asp-401, His-405, Asp-442, His-443, and His-460.

It belongs to the BPG-independent phosphoglycerate mutase family. The cofactor is Mn(2+).

It localises to the plastid. The protein localises to the chloroplast. It carries out the reaction (2R)-2-phosphoglycerate = (2R)-3-phosphoglycerate. The protein operates within carbohydrate degradation; glycolysis; pyruvate from D-glyceraldehyde 3-phosphate: step 3/5. Functionally, catalyzes the interconversion of 2-phosphoglycerate and 3-phosphoglycerate. This Pyropia yezoensis (Susabi-nori) protein is 2,3-bisphosphoglycerate-independent phosphoglycerate mutase.